The following is a 311-amino-acid chain: Large ribosomal subunit protein uL18 (311 aa).

It belongs to the universal ribosomal protein uL18 family. Component of the large ribosomal subunit (LSU).

It is found in the cytoplasm. Its subcellular location is the nucleus. Component of the ribosome, a large ribonucleoprotein complex responsible for the synthesis of proteins in the cell. The small ribosomal subunit (SSU) binds messenger RNAs (mRNAs) and translates the encoded message by selecting cognate aminoacyl-transfer RNA (tRNA) molecules. The large subunit (LSU) contains the ribosomal catalytic site termed the peptidyl transferase center (PTC), which catalyzes the formation of peptide bonds, thereby polymerizing the amino acids delivered by tRNAs into a polypeptide chain. The nascent polypeptides leave the ribosome through a tunnel in the LSU and interact with protein factors that function in enzymatic processing, targeting, and the membrane insertion of nascent chains at the exit of the ribosomal tunnel. This chain is Large ribosomal subunit protein uL18 (RPL5), found in Eimeria tenella (Coccidian parasite).